Consider the following 367-residue polypeptide: Protein RecA (367 aa).

Position 73-80 (73-80 (GPESSGKT)) interacts with ATP.

The protein belongs to the RecA family.

The protein resides in the cytoplasm. In terms of biological role, can catalyze the hydrolysis of ATP in the presence of single-stranded DNA, the ATP-dependent uptake of single-stranded DNA by duplex DNA, and the ATP-dependent hybridization of homologous single-stranded DNAs. It interacts with LexA causing its activation and leading to its autocatalytic cleavage. This chain is Protein RecA, found in Delftia acidovorans (strain DSM 14801 / SPH-1).